The chain runs to 204 residues: Factor arrest protein 3 (204 aa).

Component of a complex at least composed of FAR3, FAR7, FAR8, FAR10, FAR11 and VPS64.

Its subcellular location is the endoplasmic reticulum. Participates in the control of the reentry into the cell cycle following pheromone treatment. The chain is Factor arrest protein 3 (FAR3) from Saccharomyces cerevisiae (strain ATCC 204508 / S288c) (Baker's yeast).